The primary structure comprises 527 residues: GMP synthase [glutamine-hydrolyzing] (527 aa).

The Glutamine amidotransferase type-1 domain maps to 4-202; that stretch reads KILILDFGSQ…VLKICGAKPD (199 aa). C81 acts as the Nucleophile in catalysis. Catalysis depends on residues H176 and E178. Positions 203 to 395 constitute a GMPS ATP-PPase domain; the sequence is WEMGNYIDEA…LGLPPSMVYR (193 aa). 230 to 236 serves as a coordination point for ATP; the sequence is SGGVDSS.

As to quaternary structure, homodimer.

The catalysed reaction is XMP + L-glutamine + ATP + H2O = GMP + L-glutamate + AMP + diphosphate + 2 H(+). It participates in purine metabolism; GMP biosynthesis; GMP from XMP (L-Gln route): step 1/1. In terms of biological role, catalyzes the synthesis of GMP from XMP. The polypeptide is GMP synthase [glutamine-hydrolyzing] (Paraburkholderia phymatum (strain DSM 17167 / CIP 108236 / LMG 21445 / STM815) (Burkholderia phymatum)).